Here is a 207-residue protein sequence, read N- to C-terminus: Protein lin-7 homolog B (207 aa).

Residues 1–13 (MAALVEPLGLERD) carry the Kinase interacting site motif. Residues 10–65 (LERDVSRAVELLERLQRSGELPPQKLQALQRVLQSRFCSAIREVYEQLYDTLDITG) enclose the L27 domain. The PDZ domain occupies 93 to 175 (VVELPKTDEG…SVKLVVRYTP (83 aa)). A disordered region spans residues 187 to 207 (KMRSARRRQQHHSYTSLESRG). Residues 198-207 (HSYTSLESRG) show a composition bias toward polar residues.

The protein belongs to the lin-7 family. In terms of assembly, forms a complex with CASK and CASKIN1. Component of the brain-specific heterotrimeric complex (LIN-10-LIN-2-LIN-7 complex) composed of at least APBA1, CASK, and LIN7, which associates with the motor protein KIF17 to transport vesicles along microtubules. Forms a heterotrimeric complex composed of MMP5, LIN7B and PATJ; the N-terminal L27 domain of PALS1 interacts with the L27 domain of PATJ and the C-terminal L27 domain of PALS1 interacts with the L27 domain of LIN7B. Forms a heterotrimeric complex with DLG1 and CASK via their L27 domains. Interacts with DLG4 and GRIN2B as well as CDH1 and CTNNB1, the channels KCNJ12/Kir2.2, KCNJ4/Kir2.3 and probably KCNJ2/Kir2.1 and SLC6A12/BGT-1 via its PDZ domain. The association of LIN7A with cadherin and beta-catenin is calcium-dependent, occurs at synaptic junctions and requires the actin cytoskeleton. Interacts with EGFR, ERBB2, ERBB3 and ERBB4 with both PDZ and KID domains. Associates with KIF17 via APBA1. Interacts with ASIC3. Interacts with TOPK. Interacts with RTKN. Interacts with APBA1. Interacts with MPP7. Interacts with DLG2. Interacts with DLG3. Expressed in the kidney; predominantly in the vasa recta.

The protein resides in the cell membrane. It is found in the basolateral cell membrane. It localises to the cell junction. Its subcellular location is the postsynaptic density membrane. The protein localises to the tight junction. Its function is as follows. Plays a role in establishing and maintaining the asymmetric distribution of channels and receptors at the plasma membrane of polarized cells. Forms membrane-associated multiprotein complexes that may regulate delivery and recycling of proteins to the correct membrane domains. The tripartite complex composed of LIN7 (LIN7A, LIN7B or LIN7C), CASK and APBA1 associates with the motor protein KIF17 to transport vesicles containing N-methyl-D-aspartate (NMDA) receptor subunit NR2B along microtubules. This complex may have the potential to couple synaptic vesicle exocytosis to cell adhesion in brain. Ensures the proper localization of GRIN2B (subunit 2B of the NMDA receptor) to neuronal postsynaptic density and may function in localizing synaptic vesicles at synapses where it is recruited by beta-catenin and cadherin. Required to localize Kir2 channels, GABA transporter (SLC6A12) and EGFR/ERBB1, ERBB2, ERBB3 and ERBB4 to the basolateral membrane of epithelial cells. May increase the amplitude of ASIC3 acid-evoked currents by stabilizing the channel at the cell surface. This chain is Protein lin-7 homolog B (Lin7b), found in Mus musculus (Mouse).